The sequence spans 554 residues: Protein NODULATION SIGNALING PATHWAY 1 (554 aa).

The disordered stretch occupies residues 76–165 (TTSTTSLEPN…NSNNGNNKDG (90 aa)). Positions 82-91 (LEPNSFNNIP) are enriched in polar residues. Basic and acidic residues predominate over residues 95–107 (LPKKRNAEDELSL). A compositionally biased stretch (low complexity) spans 150–162 (AKANGSNSNNGNN). The GRAS domain maps to 159 to 548 (NGNNKDGRWA…QPVSFCSLWK (390 aa)). A leucine repeat I (LRI) region spans residues 166-227 (RWAEQLLNPC…HHLSSSSSST (62 aa)). The VHIID stretch occupies residues 246–315 (LLKFYEFSPW…GGPPPLVRLT (70 aa)). The short motif at 281-285 (LHILD) is the VHIID element. Residues 331–373 (TPFSIGPCGDTFSSGLLGYAQSLNVNLQIKKLDNHPLQTLNAK) form a leucine repeat II (LRII) region. The interval 383 to 468 (LIVCAQFRLH…RDSDERKMME (86 aa)) is PFYRE. The interval 471 to 548 (AAKALTNQRE…QPVSFCSLWK (78 aa)) is SAW.

The protein belongs to the GRAS family. As to expression, expressed in epidermal and cortical root cells.

The protein resides in the nucleus. Its function is as follows. Transcriptional regulator essential for Nod-factor-induced gene expression. Acts downstream of calcium spiking. May be a target of DMI3, a calcium/calmodulin-dependent protein kinase (CCaMK). Is essential for Nod factor-elicited expression of ERN1. Transcription factor involved in the control of strigolactone biosynthesis in roots through the activation of the beta-carotene isomerase D27, which participates in a pathway leading to biosynthesis of strigolactones. The sequence is that of Protein NODULATION SIGNALING PATHWAY 1 from Medicago truncatula (Barrel medic).